The chain runs to 217 residues: D-glycero-beta-D-manno-heptose-1,7-bisphosphate 7-phosphatase (217 aa).

Aspartate 36 functions as the Nucleophile in the catalytic mechanism. Mg(2+) is bound by residues aspartate 36 and aspartate 38. Substrate contacts are provided by residues 36 to 38 (DRD), 44 to 47 (DTDY), 78 to 81 (TNQS), and 135 to 136 (RK). Residue aspartate 38 is the Proton donor of the active site. Mg(2+)-binding residues include aspartate 161 and lysine 162. Lysine 162 serves as a coordination point for substrate.

It belongs to the gmhB family. In terms of assembly, monomer. Requires Mg(2+) as cofactor.

The protein resides in the cytoplasm. It catalyses the reaction D-glycero-beta-D-manno-heptose 1,7-bisphosphate + H2O = D-glycero-beta-D-manno-heptose 1-phosphate + phosphate. The protein operates within nucleotide-sugar biosynthesis; ADP-L-glycero-beta-D-manno-heptose biosynthesis; ADP-L-glycero-beta-D-manno-heptose from D-glycero-beta-D-manno-heptose 7-phosphate: step 2/4. Functionally, converts the D-glycero-beta-D-manno-heptose 1,7-bisphosphate (beta-HBP) intermediate into D-glycero-beta-D-manno-heptose 1-phosphate by removing the phosphate group at the C-7 position. The polypeptide is D-glycero-beta-D-manno-heptose-1,7-bisphosphate 7-phosphatase (gmhB) (Mesorhizobium japonicum (strain LMG 29417 / CECT 9101 / MAFF 303099) (Mesorhizobium loti (strain MAFF 303099))).